A 255-amino-acid polypeptide reads, in one-letter code: Serine/threonine-protein phosphatase PP1 (255 aa).

Residues aspartate 2, histidine 4, aspartate 30, and asparagine 62 each coordinate Mn(2+). Residue histidine 63 is the Proton donor of the active site. Mn(2+) contacts are provided by histidine 111 and histidine 186.

The protein belongs to the PPP phosphatase family. PP-1 subfamily. The cofactor is Mn(2+).

It catalyses the reaction O-phospho-L-seryl-[protein] + H2O = L-seryl-[protein] + phosphate. The enzyme catalyses O-phospho-L-threonyl-[protein] + H2O = L-threonyl-[protein] + phosphate. This chain is Serine/threonine-protein phosphatase PP1, found in Brassica napus (Rape).